The chain runs to 258 residues: UPF0246 protein Pnec_1068 (258 aa).

This sequence belongs to the UPF0246 family.

The polypeptide is UPF0246 protein Pnec_1068 (Polynucleobacter necessarius subsp. necessarius (strain STIR1)).